The chain runs to 96 residues: Large ribosomal subunit protein bL21 (96 aa).

Belongs to the bacterial ribosomal protein bL21 family. Part of the 50S ribosomal subunit. Contacts protein L20.

This protein binds to 23S rRNA in the presence of protein L20. This chain is Large ribosomal subunit protein bL21, found in Chlorobium chlorochromatii (strain CaD3).